The sequence spans 499 residues: 6-hydroxynicotinate reductase (499 aa).

4Fe-4S ferredoxin-type domains lie at 1–29 (MFKIDEEKCKKCRMCVKECPVHAVYYEKK) and 31–61 (KGAIVEITEKCVECGICKRVCKFGAIENDAP). Residues C9, C12, C15, C19, C41, C44, C47, and C51 each contribute to the [4Fe-4S] cluster site.

Homotetramer. It depends on an oxidized flavin as a cofactor. Requires [2Fe-2S] cluster as cofactor. [4Fe-4S] cluster is required as a cofactor.

It carries out the reaction 1,4,5,6-tetrahydro-6-oxonicotinate + oxidized 2[4Fe-4S]-[ferredoxin] = 6-hydroxynicotinate + reduced 2[4Fe-4S]-[ferredoxin] + 2 H(+). The protein operates within cofactor degradation; nicotinate degradation; propanoate and pyruvate from 6-hydroxynicotinate: step 1/8. Its function is as follows. Catalyzes the reversible reduction of 6-hydroxynicotinate to 6-oxo-1,4,5,6-tetrahydronicotinate. This chain is 6-hydroxynicotinate reductase, found in Eubacterium barkeri (Clostridium barkeri).